The sequence spans 314 residues: 4-diphosphocytidyl-2-C-methyl-D-erythritol kinase (314 aa).

Lysine 11 is a catalytic residue. 95 to 105 (PIGAGLAGGST) serves as a coordination point for ATP. Aspartate 137 is a catalytic residue.

Belongs to the GHMP kinase family. IspE subfamily.

It catalyses the reaction 4-CDP-2-C-methyl-D-erythritol + ATP = 4-CDP-2-C-methyl-D-erythritol 2-phosphate + ADP + H(+). It functions in the pathway isoprenoid biosynthesis; isopentenyl diphosphate biosynthesis via DXP pathway; isopentenyl diphosphate from 1-deoxy-D-xylulose 5-phosphate: step 3/6. In terms of biological role, catalyzes the phosphorylation of the position 2 hydroxy group of 4-diphosphocytidyl-2C-methyl-D-erythritol. The protein is 4-diphosphocytidyl-2-C-methyl-D-erythritol kinase of Synechococcus elongatus (strain ATCC 33912 / PCC 7942 / FACHB-805) (Anacystis nidulans R2).